A 347-amino-acid polypeptide reads, in one-letter code: S-adenosylmethionine:tRNA ribosyltransferase-isomerase (347 aa).

Belongs to the QueA family. In terms of assembly, monomer.

It localises to the cytoplasm. The enzyme catalyses 7-aminomethyl-7-carbaguanosine(34) in tRNA + S-adenosyl-L-methionine = epoxyqueuosine(34) in tRNA + adenine + L-methionine + 2 H(+). The protein operates within tRNA modification; tRNA-queuosine biosynthesis. Functionally, transfers and isomerizes the ribose moiety from AdoMet to the 7-aminomethyl group of 7-deazaguanine (preQ1-tRNA) to give epoxyqueuosine (oQ-tRNA). This Bordetella pertussis (strain Tohama I / ATCC BAA-589 / NCTC 13251) protein is S-adenosylmethionine:tRNA ribosyltransferase-isomerase.